Consider the following 186-residue polypeptide: Protein GrpE (186 aa).

Basic and acidic residues-rich tracts occupy residues 1–13 (MSDN…EEQH) and 23–34 (EETHQAEDAVEH). Residues 1–34 (MSDNKTELNEEQHNATAEGEVSEETHQAEDAVEH) are disordered.

Belongs to the GrpE family. In terms of assembly, homodimer.

The protein resides in the cytoplasm. Its function is as follows. Participates actively in the response to hyperosmotic and heat shock by preventing the aggregation of stress-denatured proteins, in association with DnaK and GrpE. It is the nucleotide exchange factor for DnaK and may function as a thermosensor. Unfolded proteins bind initially to DnaJ; upon interaction with the DnaJ-bound protein, DnaK hydrolyzes its bound ATP, resulting in the formation of a stable complex. GrpE releases ADP from DnaK; ATP binding to DnaK triggers the release of the substrate protein, thus completing the reaction cycle. Several rounds of ATP-dependent interactions between DnaJ, DnaK and GrpE are required for fully efficient folding. The polypeptide is Protein GrpE (Hydrogenovibrio crunogenus (strain DSM 25203 / XCL-2) (Thiomicrospira crunogena)).